Consider the following 185-residue polypeptide: Putative gustatory receptor clone PTE01 (185 aa).

The helical transmembrane segment at 1–11 (MYLFLSNLSLA) threads the bilayer. Residues 12–42 (DISFTSTTLPKMIVDIQTNNRAISYSGCLTQ) lie on the Extracellular side of the membrane. A helical transmembrane segment spans residues 43–62 (MSFFMLFGCLDSLLLTAMAY). At 63–84 (DRFVAICHPLHYQVIMNPRLCG) the chain is on the cytoplasmic side. The chain crosses the membrane as a helical span at residues 85–105 (LLVFLSILISLLVSQLHNSVV). Residues 106–138 (LQLTYFKSVDISHFFCDPSLLLNLACSDTFTNN) lie on the Extracellular side of the membrane. Residues 139–160 (IVMYFVGAISGFLPISGIFFSY) traverse the membrane as a helical segment. The Cytoplasmic segment spans residues 161–182 (YKIVSSILRMPSPGGKYKAFST). The chain crosses the membrane as a helical span at residues 183–185 (CGS).

This sequence belongs to the G-protein coupled receptor 1 family. In terms of tissue distribution, tongue specific.

It is found in the cell membrane. Its function is as follows. Possible taste receptor. This chain is Putative gustatory receptor clone PTE01, found in Rattus norvegicus (Rat).